The sequence spans 960 residues: Anoctamin-1 (960 aa).

Residues 1–333 (MRVPEKYSTL…FGEKVGLYFA (333 aa)) lie on the Cytoplasmic side of the membrane. The disordered stretch occupies residues 92-115 (TRSVRQDQPLPGKGSPVDAGSPEV). Serine 196 carries the phosphoserine modification. Residues 334 to 354 (WLGAYTQMLIPASIVGVIVFL) traverse the membrane as a helical segment. At 355-406 (YGCATVDENIPSMEMCDQRYNITMCPLCDKTCSYWKMSSACATARASHLFDN) the chain is on the extracellular side. 4 disulfide bridges follow: cysteine 370/cysteine 395, cysteine 379/cysteine 836, cysteine 382/cysteine 386, and cysteine 625/cysteine 630. A helical membrane pass occupies residues 407–427 (PATVFFSVFMALWAATFMEHW). Glutamate 425 is a Ca(2+) binding site. Residues 428–493 (KRKQMRLNYR…RDRFPAYFTN (66 aa)) lie on the Cytoplasmic side of the membrane. The chain crosses the membrane as a helical span at residues 494-514 (LVSIIFMIAVTFAIVLGVIIY). The Extracellular segment spans residues 515 to 542 (RISTAAALAMNSSPSVRSNIRVTVTATA). The helical transmembrane segment at 543–563 (VIINLVVIILLDEVYGCIARW) threads the bilayer. Over 564–581 (LTKIEVPKTEKSFEERLT) the chain is Cytoplasmic. Residues 582-602 (FKAFLLKFVNSYTPIFYVAFF) form a helical membrane-spanning segment. The Extracellular portion of the chain corresponds to 603–631 (KGRFVGRPGDYVYIFRSFRMEECAPGGCL). A helical transmembrane segment spans residues 632 to 652 (MELCIQLSIIMLGKQLIQNNL). Asparagine 651, glutamate 654, glutamate 702, glutamate 705, glutamate 734, and aspartate 738 together coordinate Ca(2+). At 653–699 (FEIGIPKMKKFIRYLKLRRQSPSDREEYVKRKQRYEVDFNLEPFAGL) the chain is on the cytoplasmic side. 2 consecutive transmembrane segments (helical) span residues 700-720 (TPEYMEMIIQFGFVTLFVASF) and 721-741 (PLAPLFALLNNIIEIRLDAKK). Over 742 to 758 (FVTELRRPVAIRAKDIG) the chain is Cytoplasmic. Residues 759–779 (IWYNILRGVGKLAVIINAFVI) traverse the membrane as a helical segment. The Extracellular segment spans residues 780–866 (SFTSDFIPRL…FWAVLAARLA (87 aa)). The N-linked (GlcNAc...) asparagine glycan is linked to asparagine 806. A helical membrane pass occupies residues 867 to 887 (FVIVFQNLVMFMSDFVDWVIP). Ca(2+)-binding residues include aspartate 883 and aspartate 888. At 888–960 (DIPKDISQQI…PSYEYHGDAL (73 aa)) the chain is on the cytoplasmic side. Residues 928 to 960 (PRDVPCNNHSPTTHPEAGDGSPVPSYEYHGDAL) form a disordered region.

This sequence belongs to the anoctamin family. Homodimer. Interacts with CFTR. Interacts with TRPV4. In terms of tissue distribution, expressed at the apical surface of the vomeronasal epithelium (at protein level). Expressed in the lateral and septal nasal glands (at protein level). Highly expressed in pulmonary bronchiole epithelial cells, pancreatic and submandibular gland acinar cells, kidney proximal tubule, all retinal cell layers, most sensory cells of dorsal root ganglia, Leydig cells and spermatocytes (at protein level). In the dorsal root ganglia, detected in small-diameter nociceptive neurons and in larger myelinated neurons (at protein level). In the dorsal root ganglia, expressed in MrgprA3-positive neurons (at protein level). In the developing brain, highly expressed in the ventricular zone and subventricular zone at 12.5 dpc and 14.5 dpc where it is detected in radial glial cells but not in neurons with expression dramatically decreased at P1 (at protein level). Highly expressed in the endometrial stroma (at protein level). In taste buds of the vallate papillae, expressed in the apical region of type I taste cells (at protein level). In the kidney, expressed in the collecting duct (at protein level). In the retina, strongly expressed in the outer and inner plexiform layers, weakly expressed in some somata in the inner nuclear layer and ganglion cell layer and not expressed in the outer nuclear layer (at protein level). Expressed in various retinal neurons including rod bipolar cells (at protein level). Expressed in eye, brain, myometrium and endometrium with higher levels in endometrium than myometrium in estrus and day 18 pregnant mice. Not detected in uterine smooth muscle cells. Expressed at high levels in the thyroid gland and gastrointestinal muscles.

The protein resides in the apical cell membrane. Its subcellular location is the presynapse. It catalyses the reaction chloride(in) = chloride(out). Its activity is regulated as follows. ATP and calmodulin are essential for its activation. Channel activity is inhibited by CFTR protein and by chloride inhibitors such as niflumic acid (NFA) and 4,4'-diisothiocyanatostilbene-2,2'-disulfonic acid (DIDS). Activated by heat with activation seen at temperatures above 44 degrees Celsius. Activated by BDNF in radial glial cells. Its function is as follows. Calcium-activated chloride channel (CaCC). Plays a role in transepithelial anion transport and smooth muscle contraction. Required for the normal functioning of the interstitial cells of Cajal (ICCs) which generate electrical pacemaker activity in gastrointestinal smooth muscles. Acts as a major contributor to basal and stimulated chloride conductance in airway epithelial cells and plays an important role in tracheal cartilage development. Required for CFTR activation by enhancing endoplasmic reticulum Ca(2+) store release and is also required for CFTR membrane expression. Required for basal and ATP-dependent mucus secretion in airways and intestine, probably by controlling exocytosis of mucus-filled granules by providing Ca(2+) to an apical signaling compartment. Contributes to airway mucus expression induced by interleukins IL3 and IL8 and by the asthma-associated protein CLCA1 and is required for expression of mucin MUC5AC. However, was shown in another study not to be required for MUC5AC expression. Plays a role in the propagation of Ca(2+) waves in Kolliker's organ in the cochlea and contributes to the refinement of auditory brainstem circuitries prior to hearing onset. In vomeronasal sensory neurons, modulates spontaneous firing patterns in the absence of stimuli as well as the firing pattern of pheromone-evoked activity. Responsible for calcium-activated chloride channel activity in type I taste cells of the vallate papillae. Acts as a heat sensor in nociceptive neurons. In dorsal root ganglion neurons, plays a role in mediating non-histaminergic Mas-related G-protein coupled receptor (MRGPR)-dependent itching, acting as a downstream effector of MRGPRs. In the developing brain, required for the Ca(2+)-dependent process extension of radial glial cells. This is Anoctamin-1 (Ano1) from Mus musculus (Mouse).